Here is a 62-residue protein sequence, read N- to C-terminus: Sperm protamine P1 (62 aa).

The tract at residues 1-62 (MARYRRRSRS…RYSRRGRRRY (62 aa)) is disordered.

It belongs to the protamine P1 family. As to expression, testis.

Its subcellular location is the nucleus. The protein resides in the chromosome. Functionally, protamines substitute for histones in the chromatin of sperm during the haploid phase of spermatogenesis. They compact sperm DNA into a highly condensed, stable and inactive complex. The protein is Sperm protamine P1 (PRM1) of Sarcophilus harrisii (Tasmanian devil).